Consider the following 207-residue polypeptide: Thymidylate kinase (207 aa).

ATP is bound at residue 7–14 (GPEGAGKS).

This sequence belongs to the thymidylate kinase family.

It catalyses the reaction dTMP + ATP = dTDP + ADP. Functionally, phosphorylation of dTMP to form dTDP in both de novo and salvage pathways of dTTP synthesis. The polypeptide is Thymidylate kinase (Pseudomonas putida (strain W619)).